Consider the following 363-residue polypeptide: NAD(P)H-quinone oxidoreductase subunit 1, chloroplastic (363 aa).

6 helical membrane-spanning segments follow: residues 30–50, 98–118, 127–147, 248–268, 300–320, and 336–356; these read LVPIFTPVSGITIGVLVIVWL, FSIGPSIAVISILLSYSVIPF, LSIGVFLWIAISSIAPIGLLM, YSGIKFGLFYVASYLNLLVSS, VFGTTIGILITLAKAYLFLFI, and LLNLGWKFLLPISLGNLLLTT.

This sequence belongs to the complex I subunit 1 family. NDH is composed of at least 16 different subunits, 5 of which are encoded in the nucleus.

Its subcellular location is the plastid. The protein localises to the chloroplast thylakoid membrane. It catalyses the reaction a plastoquinone + NADH + (n+1) H(+)(in) = a plastoquinol + NAD(+) + n H(+)(out). The enzyme catalyses a plastoquinone + NADPH + (n+1) H(+)(in) = a plastoquinol + NADP(+) + n H(+)(out). Its function is as follows. NDH shuttles electrons from NAD(P)H:plastoquinone, via FMN and iron-sulfur (Fe-S) centers, to quinones in the photosynthetic chain and possibly in a chloroplast respiratory chain. The immediate electron acceptor for the enzyme in this species is believed to be plastoquinone. Couples the redox reaction to proton translocation, and thus conserves the redox energy in a proton gradient. The sequence is that of NAD(P)H-quinone oxidoreductase subunit 1, chloroplastic from Drimys granadensis.